Reading from the N-terminus, the 669-residue chain is MLRTRLSVSVAARSQLTRSLTASRTAPLRRWPIQQSRLYSSNTRSHKATTTRENTFQKPYSDEEVTKTPVGSRARKIFEAPHPHATRLTVEGAIECPLESFQLLNSPLFNKGSAFTQEEREAFNLEALLPPQVNTLDEQLERSYKQLCYLKTPLAKNDFMTSLRVQNKVLYFALIRRHIKELVPIIYTPTEGDAIAAYSHRFRKPEGVFLDITEPDSIECRLATYGGDKDVDYIVVSDSEGILGIGDQGIGGVRIAISKLALMTLCGGIHPGRVLPVCLDVGTNNKKLARDELYMGNKFSRIRGKQYDDFLEKFIKAVKKVYPSAVLHFEDFGVKNARRLLEKYRYELPSFNDDIQGTGAVVMASLIAALKHTNRDLKDTRVLIYGAGSAGLGIADQIVNHMVTHGVDKEEARKKIFLMDRRGLILQSYEANSTPAQHVYAKSDAEWAGINTRSLHDVVENVKPTCLVGCSTQAGAFTQDVVEEMHKHNPRPIIFPLSNPTRLHEAVPADLMKWTNNNALVATGSPFPPVDGYRISENNNCYSFPGIGLGAVLSRATTITDKMISAAVDQLAELSPLREGDSRPGLLPGLDTITNTSARLATAVILQALEEGTARIEQEQVPGGAPGETVKVPRDFDECLQWVKAQMWEPVYRPMIKVQHDPSVHTNQL.

Positions 33 to 43 (IQQSRLYSSNT) are enriched in polar residues. Positions 33-68 (IQQSRLYSSNTRSHKATTTRENTFQKPYSDEEVTKT) are disordered. Position 142 (arginine 142) interacts with fumarate. Tyrosine 187 (proton donor) is an active-site residue. The Proton acceptor role is filled by lysine 259. Positions 330, 331, and 354 each coordinate a divalent metal cation. The NAD(+) site is built by alanine 387 and alanine 390. Residues asparagine 499 and asparagine 539 each contribute to the (S)-malate site.

Belongs to the malic enzymes family. Requires Mg(2+) as cofactor. The cofactor is Mn(2+).

Its subcellular location is the mitochondrion matrix. The catalysed reaction is (S)-malate + NAD(+) = pyruvate + CO2 + NADH. It carries out the reaction oxaloacetate + H(+) = pyruvate + CO2. Its function is as follows. NAD-dependent mitochondrial malic enzyme that catalyzes the oxidative decarboxylation of malate to pyruvate. In Saccharomyces cerevisiae (strain ATCC 204508 / S288c) (Baker's yeast), this protein is NAD-dependent malic enzyme, mitochondrial (MAE1).